The primary structure comprises 398 residues: Acetate kinase (398 aa).

Asn-8 is a Mg(2+) binding site. Residue Lys-15 participates in ATP binding. A substrate-binding site is contributed by Arg-89. Residue Asp-146 is the Proton donor/acceptor of the active site. ATP contacts are provided by residues 206–210 (HIGNG), 283–285 (DMR), and 331–335 (GMGEN). Glu-383 contacts Mg(2+).

It belongs to the acetokinase family. As to quaternary structure, homodimer. It depends on Mg(2+) as a cofactor. The cofactor is Mn(2+).

It is found in the cytoplasm. It carries out the reaction acetate + ATP = acetyl phosphate + ADP. Its pathway is metabolic intermediate biosynthesis; acetyl-CoA biosynthesis; acetyl-CoA from acetate: step 1/2. Catalyzes the formation of acetyl phosphate from acetate and ATP. Can also catalyze the reverse reaction. The polypeptide is Acetate kinase (Streptococcus pyogenes serotype M1).